Here is a 116-residue protein sequence, read N- to C-terminus: Chorion protein S15 (116 aa).

Residues 1 to 18 (MKFLIAFAVLALVACINA) form the signal peptide.

It belongs to the chorion protein S15/S18 family.

It is found in the secreted. Chorion membrane (egg shell) protein; plays a role in protecting the egg from the environment. In Drosophila virilis (Fruit fly), this protein is Chorion protein S15 (Cp15).